The primary structure comprises 357 residues: Protein AAR2 homolog (357 aa).

It belongs to the AAR2 family.

This Caenorhabditis elegans protein is Protein AAR2 homolog.